A 74-amino-acid polypeptide reads, in one-letter code: Large ribosomal subunit protein bL31 (74 aa).

Zn(2+)-binding residues include cysteine 16, cysteine 18, cysteine 37, and cysteine 40.

It belongs to the bacterial ribosomal protein bL31 family. Type A subfamily. As to quaternary structure, part of the 50S ribosomal subunit. It depends on Zn(2+) as a cofactor.

Binds the 23S rRNA. This chain is Large ribosomal subunit protein bL31, found in Koribacter versatilis (strain Ellin345).